Consider the following 352-residue polypeptide: Leukotriene B4 receptor 1 (352 aa).

At 1-19 the chain is on the extracellular side; that stretch reads MNTTSSAAPPSLGVEFISL. N2 carries an N-linked (GlcNAc...) asparagine glycan. Residues 20–42 traverse the membrane as a helical segment; sequence LAIILLSVALAVGLPGNSFVVWS. The Cytoplasmic segment spans residues 43–54; that stretch reads ILKRMQKRSVTA. The chain crosses the membrane as a helical span at residues 55 to 75; sequence LMVLNLALADLAVLLTAPFFL. Topologically, residues 76–91 are extracellular; that stretch reads HFLAQGTWSFGLAGCR. Residues 92–113 traverse the membrane as a helical segment; that stretch reads LCHYVCGVSMYASVLLITAMSL. The Cytoplasmic segment spans residues 114–138; it reads DRSLAVARPFVSQKLRTKAMARRVL. The helical transmembrane segment at 139–159 threads the bilayer; the sequence is AGIWVLSFLLATPVLAYRTVV. The Extracellular portion of the chain corresponds to 160–178; it reads PWKTNMSLCFPRYPSEGHR. N164 carries an N-linked (GlcNAc...) asparagine glycan. The chain crosses the membrane as a helical span at residues 179-199; the sequence is AFHLIFEAVTGFLLPFLAVVA. The Cytoplasmic segment spans residues 200-221; sequence SYSDIGRRLQARRFRRSRRTGR. A helical transmembrane segment spans residues 222–242; it reads LVVLIILTFAAFWLPYHVVNL. At 243-268 the chain is on the extracellular side; it reads AEAGRALAGQAAGLGLVGKRLSLARN. A helical transmembrane segment spans residues 269–289; that stretch reads VLIALAFLSSSVNPVLYACAG. Residues 290–352 are Cytoplasmic-facing; the sequence is GGLLRSAGVG…SSPLKLNELN (63 aa). 2 stretches are compositionally biased toward polar residues: residues 310-326 and 338-352; these read SEASSTRRGGSLGQTAR and ESLTASSPLKLNELN. The segment at 310-352 is disordered; that stretch reads SEASSTRRGGSLGQTARSGPAALEPGPSESLTASSPLKLNELN.

Belongs to the G-protein coupled receptor 1 family. Phosphorylated by GRK6 upon leukotriene B4 binding; which promotes desensitization. In terms of tissue distribution, expressed at highest levels in heart, skeletal muscle and at lower levels in brain and liver. High level of expression in lymphoid tissues.

It localises to the cell membrane. Functionally, receptor for extracellular ATP &gt; UTP and ADP. The activity of this receptor is mediated by G proteins which activate a phosphatidylinositol-calcium second messenger system. May be the cardiac P2Y receptor involved in the regulation of cardiac muscle contraction through modulation of L-type calcium currents. Is a receptor for leukotriene B4, a potent chemoattractant involved in inflammation and immune response. This is Leukotriene B4 receptor 1 (LTB4R) from Homo sapiens (Human).